A 430-amino-acid chain; its full sequence is S-adenosylmethionine synthase (430 aa).

His-14 lines the ATP pocket. Asp-16 contacts Mg(2+). Glu-42 lines the K(+) pocket. The L-methionine site is built by Glu-55 and Gln-98. Positions 98–108 are flexible loop; the sequence is QSPDINRGVER. ATP is bound by residues 164-166, 254-255, Asp-263, 269-270, Ala-286, and Lys-290; these read DAK, KF, and RK. An L-methionine-binding site is contributed by Asp-263. Lys-294 provides a ligand contact to L-methionine.

This sequence belongs to the AdoMet synthase family. In terms of assembly, homotetramer; dimer of dimers. Mg(2+) is required as a cofactor. The cofactor is K(+).

The protein resides in the cytoplasm. The enzyme catalyses L-methionine + ATP + H2O = S-adenosyl-L-methionine + phosphate + diphosphate. It participates in amino-acid biosynthesis; S-adenosyl-L-methionine biosynthesis; S-adenosyl-L-methionine from L-methionine: step 1/1. In terms of biological role, catalyzes the formation of S-adenosylmethionine (AdoMet) from methionine and ATP. The overall synthetic reaction is composed of two sequential steps, AdoMet formation and the subsequent tripolyphosphate hydrolysis which occurs prior to release of AdoMet from the enzyme. The polypeptide is S-adenosylmethionine synthase (Bacteroides thetaiotaomicron (strain ATCC 29148 / DSM 2079 / JCM 5827 / CCUG 10774 / NCTC 10582 / VPI-5482 / E50)).